We begin with the raw amino-acid sequence, 350 residues long: RNA 3'-terminal phosphate cyclase (350 aa).

ATP is bound by residues Gln107 and 290-294 (FLGDQ). His316 functions as the Tele-AMP-histidine intermediate in the catalytic mechanism.

This sequence belongs to the RNA 3'-terminal cyclase family. Type 1 subfamily.

The protein localises to the cytoplasm. The catalysed reaction is a 3'-end 3'-phospho-ribonucleotide-RNA + ATP = a 3'-end 2',3'-cyclophospho-ribonucleotide-RNA + AMP + diphosphate. Its function is as follows. Catalyzes the conversion of 3'-phosphate to a 2',3'-cyclic phosphodiester at the end of RNA. The mechanism of action of the enzyme occurs in 3 steps: (A) adenylation of the enzyme by ATP; (B) transfer of adenylate to an RNA-N3'P to produce RNA-N3'PP5'A; (C) and attack of the adjacent 2'-hydroxyl on the 3'-phosphorus in the diester linkage to produce the cyclic end product. The biological role of this enzyme is unknown but it is likely to function in some aspects of cellular RNA processing. This Gloeothece citriformis (strain PCC 7424) (Cyanothece sp. (strain PCC 7424)) protein is RNA 3'-terminal phosphate cyclase.